The sequence spans 211 residues: Putative F-box protein At1g52490 (211 aa).

Residues 12-59 enclose the F-box domain; the sequence is EEEYLQLPLDLIVEILKKLPLKSLVRFRCVSKQFSTIICSLRDFIESV.

The protein is Putative F-box protein At1g52490 of Arabidopsis thaliana (Mouse-ear cress).